The primary structure comprises 420 residues: Reticulon-4 receptor-like 2 (420 aa).

Residues 1 to 30 (MLPGLRRLLQGPASACLLLTLLALPPVTPS) form the signal peptide. 2 cysteine pairs are disulfide-bonded: Cys31-Cys37 and Cys35-Cys46. In terms of domain architecture, LRRNT spans 31-60 (CPMLCTCYSSPPTVSCQANNFSSVPLSLPP). N-linked (GlcNAc...) asparagine glycosylation occurs at Asn50. LRR repeat units lie at residues 61–82 (STQRLFLQNNLIRSLRPGTFGP), 83–104 (NLLTLWLFSNNLSTIYPGTFRH), 107–129 (ALEELDLGDNRHLRSLEPDTFQG), 132–153 (RLQSLHLYRCQLSSLPGNIFRG), 156–177 (SLQYLYLQENSLLHLQDDLFAD), 180–201 (NLSHLFLHGNRLRLLTEHVFRG), 204–225 (SLDRLLLHGNRLQGVHRAAFHG), and 228–249 (RLTILYLFNNSLASLPGEALAD). The N-linked (GlcNAc...) asparagine glycan is linked to Asn93. N-linked (GlcNAc...) asparagine glycosylation occurs at Asn236. Residues 261 to 312 (NPWACDCRARPLWAWFQRARVSSSDVTCATPPERQGRDLRTLRDTDFQACPP) form the LRRCT domain. Disulfide bonds link Cys265–Cys288 and Cys267–Cys310. The disordered stretch occupies residues 286–390 (VTCATPPERQ…GEQTCPGAAC (105 aa)). Over residues 294-306 (RQGRDLRTLRDTD) the composition is skewed to basic and acidic residues. The tract at residues 315-327 (PTRPGSRARGNSS) is important for interaction with MAG. The segment covering 351-360 (LPAEDSRGRQ) has biased composition (basic and acidic residues). A lipid anchor (GPI-anchor amidated cysteine) is attached at Cys390. A propeptide spans 391 to 420 (QAPADSRGPVLSAGLRTPLLCLLLLAPHHL) (removed in mature form).

It belongs to the Nogo receptor family. In terms of assembly, interaction with MAG is controversial, and may be indirect. Interacts with MAG. Does not interact with OMG and RTN4. In terms of processing, undergoes zinc metalloproteinase-mediated ectodomain shedding in neuroblastoma cells; is released both as a full-length ectodomain and an N-terminal fragment containing the leucine-rich repeat (LRR) region of the protein. N-glycosylated. O-glycosylated. Contains terminal sialic acid groups on its glycan chains. Detected in adult brain, in neocortex, hippocampus, striatum and dorsal root ganglion neurons, and in retina (at protein level). In brain, detected in cerebral cortex and hippocampus. Weak or no expression detected in the cerebellum, thalamus or striatum.

It is found in the cell membrane. The protein localises to the cell projection. It localises to the dendrite. The protein resides in the perikaryon. Its subcellular location is the axon. It is found in the membrane raft. Functionally, cell surface receptor that plays a functionally redundant role in the inhibition of neurite outgrowth mediated by MAG. Plays a functionally redundant role in postnatal brain development. Contributes to normal axon migration across the brain midline and normal formation of the corpus callosum. Does not seem to play a significant role in regulating axon regeneration in the adult central nervous system. Protects motoneurons against apoptosis; protection against apoptosis is probably mediated by MAG. Like other family members, plays a role in restricting the number dendritic spines and the number of synapses that are formed during brain development. Signaling mediates activation of Rho and downstream reorganization of the actin cytoskeleton. This chain is Reticulon-4 receptor-like 2, found in Rattus norvegicus (Rat).